A 1906-amino-acid chain; its full sequence is A disintegrin and metalloproteinase with thrombospondin motifs 20 (1906 aa).

The signal sequence occupies residues 1–26 (MRVAKWLTGLLCPISLLLTGSWEVRF). Residues 27-249 (HPRQEALVKT…RSQLHSRNKR (223 aa)) constitute a propeptide that is removed on maturation. N-linked (GlcNAc...) asparagine glycosylation is found at Asn92 and Asn221. Residues 201–222 (PCEVSENQMEKTALPSQSSRNT) form a disordered region. The Peptidase M12B domain occupies 255 to 464 (RYVEVMVTAD…GHGECLLDKP (210 aa)). 11 disulfides stabilise this stretch: Cys330–Cys383, Cys359–Cys365, Cys377–Cys459, Cys415–Cys443, Cys486–Cys508, Cys497–Cys518, Cys503–Cys537, Cys531–Cys542, Cys565–Cys602, Cys569–Cys607, and Cys580–Cys592. Residue His399 coordinates Zn(2+). The active site involves Glu400. Zn(2+) is bound by residues His403 and His409. Residues 465–552 (NGRTYDLSPQ…VTRDMETRPV (88 aa)) enclose the Disintegrin domain. Residues 553 to 608 (DGEWGPWGPYSSCSRTCGGGIKSTARLCDRPEPRNGGRYCVGRRMKFRSCNTDSCP) enclose the TSP type-1 1 domain. 3 N-linked (GlcNAc...) asparagine glycosylation sites follow: Asn714, Asn798, and Asn805. The spacer stretch occupies residues 721–842 (AGVFNSAHYG…FNIPIEERSN (122 aa)). 7 consecutive TSP type-1 domains span residues 843–901 (LFSW…MDCE), 906–962 (IIGK…GSCV), 962–1015 (VLTR…NCNE), 1017–1074 (PCPS…RACA), 1075–1131 (SWHV…APCL), 1148–1202 (RAAQ…LCFS), and 1203–1260 (PCGE…AACP). A glycan (N-linked (GlcNAc...) asparagine) is linked at Asn1057. The interval 1265-1295 (RAPSSSEQPSHVPSRNVPLTHKPGENQDQGA) is disordered. Polar residues predominate over residues 1266-1277 (APSSSEQPSHVP). TSP type-1 domains are found at residues 1300–1351 (RGNQ…RHCG), 1354–1411 (PCPH…HACP), 1412–1465 (EDVS…KACR), 1468–1526 (RCPS…QDCM), 1527–1584 (RYQW…PHCK), 1585–1648 (YSVV…LRSC), and 1650–1706 (HVAT…NDCK). Asn1562 is a glycosylation site (N-linked (GlcNAc...) asparagine). In terms of domain architecture, GON spans 1707 to 1906 (LLTTCKELQV…MATGLSIQVL (200 aa)). Asn1719, Asn1759, and Asn1777 each carry an N-linked (GlcNAc...) asparagine glycan.

The cofactor is Zn(2+). Post-translationally, the precursor is cleaved by a furin endopeptidase. Glycosylated. Can be O-fucosylated by POFUT2 on a serine or a threonine residue found within the consensus sequence C1-X(2)-(S/T)-C2-G of the TSP type-1 repeat domains where C1 and C2 are the first and second cysteine residue of the repeat, respectively. Fucosylated repeats can then be further glycosylated by the addition of a beta-1,3-glucose residue by the glucosyltransferase, B3GALTL. Fucosylation mediates the efficient secretion of ADAMTS family members. Can also be C-glycosylated with one or two mannose molecules on tryptophan residues within the consensus sequence W-X-X-W of the TPRs, and N-glycosylated. These other glycosylations can also facilitate secretion. Expressed at low level in testis and brain.

It localises to the secreted. The protein localises to the extracellular space. The protein resides in the extracellular matrix. Functionally, may play a role in tissue-remodeling process occurring in both normal and pathological conditions. May have a protease-independent function in the transport from the endoplasmic reticulum to the Golgi apparatus of secretory cargos, mediated by the GON domain. This is A disintegrin and metalloproteinase with thrombospondin motifs 20 (Adamts20) from Mus musculus (Mouse).